A 113-amino-acid chain; its full sequence is Flagellar hook-basal body complex protein FliE (113 aa).

The protein belongs to the FliE family.

It localises to the bacterial flagellum basal body. The chain is Flagellar hook-basal body complex protein FliE from Rhizobium leguminosarum bv. trifolii (strain WSM2304).